We begin with the raw amino-acid sequence, 312 residues long: Ribosomal protein L11 methyltransferase (312 aa).

The S-adenosyl-L-methionine site is built by Thr-160, Gly-181, Asp-203, and Asn-246.

It belongs to the methyltransferase superfamily. PrmA family.

It localises to the cytoplasm. The catalysed reaction is L-lysyl-[protein] + 3 S-adenosyl-L-methionine = N(6),N(6),N(6)-trimethyl-L-lysyl-[protein] + 3 S-adenosyl-L-homocysteine + 3 H(+). Methylates ribosomal protein L11. The polypeptide is Ribosomal protein L11 methyltransferase (Staphylococcus aureus (strain JH1)).